The sequence spans 865 residues: MVANKERAIKRKASEGGAKPEPITSKQEPLDESNDEDNSNESDYESDKENLLGSIENEGEDSSDSDGEYATDDDEDDVLSFESLNSDGEEEDEEEDAGTTLEEVEREAEEDDDEEDGEDDEEADSADDVNSDSSPEEDEGDLEDSSDEELEEEEEEEEAKENGKEKPAKAKAERKQREEQFESDDEPLPDDLKLGRIEDVLGTGEKKTRGLGVFPPVPKRKGKAAQDEYAAGDTSDEEDIRNTVGNIPMHWYDEYKHVGYDWDAKKIIKAKKGDAIDDFLQRMEDPNFWRTVTDPQTGQKVVLSDEDIGLIKRIMSGRNPDAEYDDYEPFIEWFTSEVEKMPIRNIPESKRSFLPSKAEKHKIGRYVHALKMGWMKTMAEKRRLEAIRRQPKFYMLWTTDHGKEEMRRIHDHVAAPKRMLPGHAESYNPPPEYLFDEKELEEWNKLANQPWKRKRAYVPQKYNSLREVPGYTRYVKERFLRCLDLYLAPRMRRSRVAVGAEYLIPKLPSPRDLQPFPTLQNLIYTGHTSLIRCISVEPKGEYIVTGSDDMTVKIWEISTARCIRTIPTGDIVRSVAWCPNSKISLVAAASGKRVLLINPKVGDYMLVKKTDDLLTEAPRSDTVDSERIRSAVQWGEVTEEEKKLGVRIVITHFREVRQVTWHGRGDYFATVMPDGAYRSVMIHQLSKRRSQVPFSKSKGLIQCVLFHPIKPCLFVATQRHIRVYDLVKQLMMKKLYPGCKWISSMAIHPKGDNLLIGTYEKRLMWFDLDLSTKPYQQLRIHNAAIRSVAFHPRYPLFASAGDDRSVIVSHGMVYNDLLQNPLIVPLRRLKNHAVVNDFSVFDVVFHPTQPWVFSSGADNTVRLYT.

2 disordered regions span residues 1–195 and 207–240; these read MVAN…LKLG and KTRG…EEDI. 3 stretches are compositionally biased toward acidic residues: residues 30 to 44, 57 to 79, and 87 to 159; these read LDES…ESDY, NEGE…DDVL, and DGEE…EEEA. Residues 160-180 are compositionally biased toward basic and acidic residues; sequence KENGKEKPAKAKAERKQREEQ. WD repeat units lie at residues 526-565, 567-607, 651-693, 696-734, 737-776, 780-819, and 835-865; these read GHTS…CIRT, PTGD…YMLV, THFR…SQVP, KSKG…MMKK, PGCK…KPYQ, IHNA…DLLQ, and VNDF…RLYT.

Belongs to the WD repeat BOP1/ERB1 family.

Its subcellular location is the nucleus. It localises to the nucleolus. It is found in the nucleoplasm. Its function is as follows. Required for maturation of ribosomal RNAs and formation of the large ribosomal subunit. The protein is Ribosome biogenesis protein BOP1 homolog of Anopheles gambiae (African malaria mosquito).